The following is a 461-amino-acid chain: Transcription factor phm6 (461 aa).

The zn(2)-C6 fungal-type DNA-binding region spans 18–50 (CNRCRNHKLKCVVTEAPNGTACCQRCIRAMVPC). 2 disordered regions span residues 55–79 (RERK…PWET) and 256–278 (LQTD…VGAT). Positions 256 to 274 (LQTDDSSSTQSESSRSRAS) are enriched in low complexity.

It is found in the nucleus. Functionally, transcription factor that regulates the expression of the gene cluster that mediates the biosynthesis of the trans-fused decalin-containing tetramic acid phomasetin. The polypeptide is Transcription factor phm6 (Pyrenochaetopsis sp).